The sequence spans 731 residues: MMRDSPSIQGTLDAATQHALLAGRHADPFSVLGPHQAGAHTVVRVLAPGARTVMAVLPGGQRTPLLPMQPGLFENTVPGLQPGAPAAYRLCIEWEGGIQHTADPYAFGPVLDAAQLDHCAAGGWRYLAGLLGAHAASVDGCAGTRFALWAPNARRVAVVGDFNGWDGRRHAMRLRYPAGVWELFLPDVGPGARYKFQVLGADGHTVLKADPLARQAEAPPATASIVPDERPFAWTDKAWMEQRAARQRCDAPISIYEVHAGSWFDDAGAPRWQNLAARLPEYARSLGFTHIELLPVMAHPFGGSWGYQPLGLFAPAAAHGAPADFAHFVDRCHEAGLGVILDWVPAHFPDDAHGLARLDGTPLYEHADPREGRHPDWNTLIYNYGRREVRTFLIASAIHWLRHYHVDGLRVDAVASMLYRDYSRPAGQWIPNRHGRRENLEAIDFLRELNAAVGVQCPGAITVAEESTAWPGVTAPVANGGLGFDYKWNMGWMHDTLRYMRRDPIHRRHHHHDLSFGMVYAYAERFVLPLSHDEVVHGKGSLLGKMPGERAAQLAQLRLYYAFMWAHPGKKLLFMGGEFGQQGEWNHDAMLQWSLLDDPAHRGLQRLVADLNHVYATLPELHCRDADPSGFAWIVGDDADNSVLAFARVDASHCLVAVCNFTPVPRPGYRFGVPHAGDWRVRVDTGATRYGGAGGGPPICLRSEPIPAHGHPQSLVLDLPGFTALYLRHSE.

The Nucleophile role is filled by Asp412. Residue Glu465 is the Proton donor of the active site.

This sequence belongs to the glycosyl hydrolase 13 family. GlgB subfamily. In terms of assembly, monomer.

The enzyme catalyses Transfers a segment of a (1-&gt;4)-alpha-D-glucan chain to a primary hydroxy group in a similar glucan chain.. It functions in the pathway glycan biosynthesis; glycogen biosynthesis. In terms of biological role, catalyzes the formation of the alpha-1,6-glucosidic linkages in glycogen by scission of a 1,4-alpha-linked oligosaccharide from growing alpha-1,4-glucan chains and the subsequent attachment of the oligosaccharide to the alpha-1,6 position. In Bordetella pertussis (strain Tohama I / ATCC BAA-589 / NCTC 13251), this protein is 1,4-alpha-glucan branching enzyme GlgB.